The chain runs to 104 residues: Large ribosomal subunit protein uL24 (104 aa).

It belongs to the universal ribosomal protein uL24 family. In terms of assembly, part of the 50S ribosomal subunit.

Functionally, one of two assembly initiator proteins, it binds directly to the 5'-end of the 23S rRNA, where it nucleates assembly of the 50S subunit. One of the proteins that surrounds the polypeptide exit tunnel on the outside of the subunit. The sequence is that of Large ribosomal subunit protein uL24 from Pseudomonas fluorescens (strain ATCC BAA-477 / NRRL B-23932 / Pf-5).